The chain runs to 512 residues: Serine--tRNA ligase, cytoplasmic (512 aa).

The residue at position 1 (Met-1) is an N-acetylmethionine. The segment at 9-61 is interaction with tRNA; that stretch reads RVDKGGDPALIRETQEKRFKDPGLVDQLVKADSEWRRCRFRADNLNKLKNLCS. Ser-241 carries the post-translational modification Phosphoserine. The L-serine site is built by Thr-271 and Arg-302. Residues 302–304 and 318–321 contribute to the ATP site; these read RQE and VHQF. Lys-323 is subject to N6-acetyllysine. Glu-325 lines the L-serine pocket. Residue 391–394 participates in ATP binding; the sequence is ELVS. Asn-427 and Thr-429 together coordinate L-serine. Residues 472–512 form a disordered region; sequence KPAPIDQEPSKKQKKQHEGSKKKAKEVTLESQLQNMEVTEA. The span at 479-499 shows a compositional bias: basic and acidic residues; that stretch reads EPSKKQKKQHEGSKKKAKEVT. Positions 482–494 match the Nuclear localization signal motif; sequence KKQKKQHEGSKKK. Polar residues predominate over residues 500-512; that stretch reads LESQLQNMEVTEA.

This sequence belongs to the class-II aminoacyl-tRNA synthetase family. Type-1 seryl-tRNA synthetase subfamily. Homodimer. The tRNA molecule may bind across the dimer. Interacts with SIRT2. Interacts with METTL6; interaction is required for the tRNA N(3)-methylcytidine methyltransferase activity of METTL6.

The protein localises to the cytoplasm. It localises to the nucleus. The catalysed reaction is tRNA(Ser) + L-serine + ATP = L-seryl-tRNA(Ser) + AMP + diphosphate + H(+). It catalyses the reaction tRNA(Sec) + L-serine + ATP = L-seryl-tRNA(Sec) + AMP + diphosphate + H(+). It functions in the pathway aminoacyl-tRNA biosynthesis; selenocysteinyl-tRNA(Sec) biosynthesis; L-seryl-tRNA(Sec) from L-serine and tRNA(Sec): step 1/1. Its function is as follows. Catalyzes the attachment of serine to tRNA(Ser) in a two-step reaction: serine is first activated by ATP to form Ser-AMP and then transferred to the acceptor end of tRNA(Ser). Is probably also able to aminoacylate tRNA(Sec) with serine, to form the misacylated tRNA L-seryl-tRNA(Sec), which will be further converted into selenocysteinyl-tRNA(Sec). In the nucleus, binds to the VEGFA core promoter and prevents MYC binding and transcriptional activation by MYC. Recruits SIRT2 to the VEGFA promoter, promoting deacetylation of histone H4 at 'Lys-16' (H4K16). Thereby, inhibits the production of VEGFA and sprouting angiogenesis mediated by VEGFA. This chain is Serine--tRNA ligase, cytoplasmic (SARS1), found in Cricetulus griseus (Chinese hamster).